The following is a 278-amino-acid chain: Large ribosomal subunit protein uL2 (278 aa).

The interval 208-278 (AGRSRWMGKR…LIIRHRKGRK (71 aa)) is disordered. A compositionally biased stretch (basic residues) spans 209 to 219 (GRSRWMGKRPQ). Positions 258–270 (KTRDSKKASEKLI) are enriched in basic and acidic residues.

It belongs to the universal ribosomal protein uL2 family. Part of the 50S ribosomal subunit. Forms a bridge to the 30S subunit in the 70S ribosome.

Functionally, one of the primary rRNA binding proteins. Required for association of the 30S and 50S subunits to form the 70S ribosome, for tRNA binding and peptide bond formation. It has been suggested to have peptidyltransferase activity; this is somewhat controversial. Makes several contacts with the 16S rRNA in the 70S ribosome. The protein is Large ribosomal subunit protein uL2 of Lactobacillus delbrueckii subsp. bulgaricus (strain ATCC 11842 / DSM 20081 / BCRC 10696 / JCM 1002 / NBRC 13953 / NCIMB 11778 / NCTC 12712 / WDCM 00102 / Lb 14).